Consider the following 548-residue polypeptide: Chaperonin GroEL 2 (548 aa).

Residues 29–32 (TLGP), 86–90 (DGTTT), glycine 418, 482–484 (NAA), and aspartate 498 each bind ATP.

The protein belongs to the chaperonin (HSP60) family. Forms a cylinder of 14 subunits composed of two heptameric rings stacked back-to-back. Interacts with the co-chaperonin GroES.

The protein localises to the cytoplasm. The catalysed reaction is ATP + H2O + a folded polypeptide = ADP + phosphate + an unfolded polypeptide.. In terms of biological role, together with its co-chaperonin GroES, plays an essential role in assisting protein folding. The GroEL-GroES system forms a nano-cage that allows encapsulation of the non-native substrate proteins and provides a physical environment optimized to promote and accelerate protein folding. In Corynebacterium glutamicum (strain ATCC 13032 / DSM 20300 / JCM 1318 / BCRC 11384 / CCUG 27702 / LMG 3730 / NBRC 12168 / NCIMB 10025 / NRRL B-2784 / 534), this protein is Chaperonin GroEL 2.